We begin with the raw amino-acid sequence, 423 residues long: Glutamyl-tRNA reductase (423 aa).

Substrate-binding positions include 49 to 52 (TCNR), serine 107, 112 to 114 (EPQ), and glutamine 118. Cysteine 50 (nucleophile) is an active-site residue. 187–192 (GAGETI) serves as a coordination point for NADP(+).

It belongs to the glutamyl-tRNA reductase family. Homodimer.

It catalyses the reaction (S)-4-amino-5-oxopentanoate + tRNA(Glu) + NADP(+) = L-glutamyl-tRNA(Glu) + NADPH + H(+). It participates in porphyrin-containing compound metabolism; protoporphyrin-IX biosynthesis; 5-aminolevulinate from L-glutamyl-tRNA(Glu): step 1/2. Functionally, catalyzes the NADPH-dependent reduction of glutamyl-tRNA(Glu) to glutamate 1-semialdehyde (GSA). The polypeptide is Glutamyl-tRNA reductase (Pseudoalteromonas atlantica (strain T6c / ATCC BAA-1087)).